Reading from the N-terminus, the 363-residue chain is UDP-N-acetylglucosamine--N-acetylmuramyl-(pentapeptide) pyrophosphoryl-undecaprenol N-acetylglucosamine transferase (363 aa).

UDP-N-acetyl-alpha-D-glucosamine contacts are provided by residues 15–17 (TGG), Asn-127, Arg-169, Ser-197, Ile-251, 270–275 (ALTVSE), and Gln-296.

Belongs to the glycosyltransferase 28 family. MurG subfamily.

It is found in the cell inner membrane. The enzyme catalyses di-trans,octa-cis-undecaprenyl diphospho-N-acetyl-alpha-D-muramoyl-L-alanyl-D-glutamyl-meso-2,6-diaminopimeloyl-D-alanyl-D-alanine + UDP-N-acetyl-alpha-D-glucosamine = di-trans,octa-cis-undecaprenyl diphospho-[N-acetyl-alpha-D-glucosaminyl-(1-&gt;4)]-N-acetyl-alpha-D-muramoyl-L-alanyl-D-glutamyl-meso-2,6-diaminopimeloyl-D-alanyl-D-alanine + UDP + H(+). It participates in cell wall biogenesis; peptidoglycan biosynthesis. Its function is as follows. Cell wall formation. Catalyzes the transfer of a GlcNAc subunit on undecaprenyl-pyrophosphoryl-MurNAc-pentapeptide (lipid intermediate I) to form undecaprenyl-pyrophosphoryl-MurNAc-(pentapeptide)GlcNAc (lipid intermediate II). This is UDP-N-acetylglucosamine--N-acetylmuramyl-(pentapeptide) pyrophosphoryl-undecaprenol N-acetylglucosamine transferase from Dichelobacter nodosus (strain VCS1703A).